We begin with the raw amino-acid sequence, 2087 residues long: Rho GTPase-activating protein 32 (2087 aa).

The region spanning 131-245 is the PX; atypical domain; it reads GSIQLSLSEE…LTWMEIDNKG (115 aa). The 63-residue stretch at 259–321 folds into the SH3 domain; it reads PAVGAAHVIK…PGHCVELINQ (63 aa). The 196-residue stretch at 372–567 folds into the Rho-GAP domain; the sequence is CDLGEHLLNS…FILNHVDVLF (196 aa). A phosphoserine mark is found at Ser706, Ser709, Ser732, and Ser738. The segment at 818–858 is disordered; sequence FLDSPGYSKDKPSANKKDAETGSSQCQTPGSTASSEPVSPL. Positions 825–837 are enriched in basic and acidic residues; that stretch reads SKDKPSANKKDAE. The span at 838–854 shows a compositional bias: polar residues; that stretch reads TGSSQCQTPGSTASSEP. Phosphoserine occurs at positions 852, 856, and 892. A compositionally biased stretch (low complexity) spans 927 to 938; sequence SNTTAQNASSST. Disordered stretches follow at residues 927–1038, 1103–1143, and 1169–1257; these read SNTT…PPKN, PAEQ…EQHH, and VPLD…ENTS. Ser952 is subject to Phosphoserine. Low complexity-rich tracts occupy residues 994–1005 and 1019–1029; these read SVSSSQSKAVAS and QDSVPVSSVSL. Residues 1124–1138 show a composition bias toward polar residues; it reads TTATGDPTHSNTTES. Over residues 1172–1182 the composition is skewed to basic and acidic residues; the sequence is DSEKSDDHVSF. Positions 1188-1203 are enriched in polar residues; it reads GKNSMPTVSFLDQDQS. The residue at position 1203 (Ser1203) is a Phosphoserine. Residues 1222 to 1232 are compositionally biased toward basic and acidic residues; the sequence is DKLHHPLEFAD. An interaction with GAB2 region spans residues 1391 to 1711; sequence RVPLLHLRAE…YSYAGLAPRP (321 aa). An asymmetric dimethylarginine mark is found at Arg1523 and Arg1533. Ser1585 carries the phosphoserine modification. Residues 1685–2087 are interaction with FYN; that stretch reads PNRDFAFYNP…QHPETQIHAE (403 aa). Residues 1798-1896 are disordered; it reads PGKTGLLSVA…QFCESKNGPP (99 aa). Positions 1823-1838 are enriched in basic and acidic residues; it reads GEDRFYRRHPEAEMDR. The segment covering 1847–1862 has biased composition (polar residues); that stretch reads STQPEKPSLPQKQSSL. Over residues 1875 to 1889 the composition is skewed to basic and acidic residues; sequence PEHRAHQEASHRQFC. Arg2037 carries the post-translational modification Omega-N-methylarginine.

The protein belongs to the PX domain-containing GAP family. As to quaternary structure, interacts with NTRK1 (via cytoplasmic domain); the interaction is independent of the phosphorylation state of NTRK1. Interacts with SHC3 (via SH2 domain). Interacts with RASA1 (via SH3 domain); the interaction is necessary for the Ras activation and cell transforming activities of ARHGAP32. Interacts with GAB1 and GAB2. Interacts with CRK and CRKL. Found in a complex with CRKL and BCAR1; upon EGF stimulation BCAR1 may be replaced by EGFR. Interacts with NCK1 (via SH3 domain); NCK1 recruits phosphorylated BCAR1 to the complex. Isoform 2 interacts with FYN; the interaction appears to be dependent on tyrosine phosphorylation of ARHGAP32. Interacts with EGFR; the interaction requires EGF stimulation and is increased by SHC3. Interacts with CDC42; the interaction requires constitutively active CDC42. Interacts with CTNNB1. Interacts with GRIN2B. Interacts with DLG4 and CDH2. Interacts with GPHN. Isoform 2 is phosphorylated on multiple tyrosine residues by FYN. Phosphorylated tyrosine residues undergo dephosphorylation after stimulation of NMDA receptors. Phosphorylated in vitro by CaMK2 in the presence of calmodulin and calcium; which inhibits GAP activity. As to expression, isoform 1 and isoform 2 are highly expressed in brain and testis. Isoform 1 is also expressed in other tissues such as lung, liver and spleen.

The protein resides in the postsynaptic density. It localises to the cell projection. The protein localises to the dendritic spine. Its subcellular location is the cytoplasm. It is found in the cell cortex. The protein resides in the endosome membrane. It localises to the golgi apparatus membrane. The protein localises to the endoplasmic reticulum membrane. Its subcellular location is the membrane. GTPase-activating protein (GAP) promoting GTP hydrolysis on RHOA, CDC42 and RAC1 small GTPases. May be involved in the differentiation of neuronal cells during the formation of neurite extensions. Involved in NMDA receptor activity-dependent actin reorganization in dendritic spines. May mediate cross-talks between Ras- and Rho-regulated signaling pathways in cell growth regulation. Isoform 2 has higher GAP activity. This Homo sapiens (Human) protein is Rho GTPase-activating protein 32 (ARHGAP32).